The primary structure comprises 188 residues: PRA1 family protein 3 (188 aa).

Position 1 is an N-acetylmethionine (Met1). At Met1 to Arg35 the chain is on the cytoplasmic side. The next 2 helical transmembrane spans lie at Val36–Ser56 and Val57–Phe77. Residues Thr78–Met93 lie on the Cytoplasmic side of the membrane. 2 helical membrane passes run Lys94–Ser114 and Leu115–Ile135. The interval Met103–Gly117 is required for homodimer formation and heterodimer formation with ARL6IP1. Residues His136–Glu188 are Cytoplasmic-facing. The targeting to endoplasmic reticulum membrane stretch occupies residues His136 to Glu188.

It belongs to the PRA1 family. In terms of assembly, homodimer. Heterodimer with ARL6IP1. Forms multimers. Interacts with ARL6. Interacts with prenylated RAB1A and RAB3A. Interacts with SLC1A1/EAAC1. Interacts with RTN2 (via first transmembrane domain). Does not interact with VAMP1, VAMP2 or VAMP3.

Its subcellular location is the endoplasmic reticulum membrane. It is found in the cell membrane. The protein resides in the cytoplasm. The protein localises to the cytoskeleton. Regulates intracellular concentrations of taurine and glutamate. Negatively modulates SLC1A1/EAAC1 glutamate transport activity by decreasing its affinity for glutamate in a PKC activity-dependent manner. Plays a role in the retention of SLC1A1/EAAC1 in the endoplasmic reticulum. The chain is PRA1 family protein 3 (ARL6IP5) from Bos taurus (Bovine).